We begin with the raw amino-acid sequence, 499 residues long: Glycerol kinase 2 (499 aa).

Residue Thr13 participates in ADP binding. ATP-binding residues include Thr13, Thr14, and Ser15. Thr13 serves as a coordination point for sn-glycerol 3-phosphate. An ADP-binding site is contributed by Arg17. 4 residues coordinate sn-glycerol 3-phosphate: Arg83, Glu84, Tyr134, and Asp241. Residues Arg83, Glu84, Tyr134, Asp241, and Gln242 each contribute to the glycerol site. ADP is bound by residues Thr263 and Gly306. Residues Thr263, Gly306, Gln310, and Gly407 each coordinate ATP. An ADP-binding site is contributed by Gly407.

The protein belongs to the FGGY kinase family.

It catalyses the reaction glycerol + ATP = sn-glycerol 3-phosphate + ADP + H(+). The protein operates within polyol metabolism; glycerol degradation via glycerol kinase pathway; sn-glycerol 3-phosphate from glycerol: step 1/1. Its function is as follows. Key enzyme in the regulation of glycerol uptake and metabolism. Catalyzes the phosphorylation of glycerol to yield sn-glycerol 3-phosphate. The chain is Glycerol kinase 2 from Saccharolobus solfataricus (strain ATCC 35092 / DSM 1617 / JCM 11322 / P2) (Sulfolobus solfataricus).